Consider the following 226-residue polypeptide: MNSFPNIAIDGPAGAGKSTVARLLSKELGFLYIDTGAMYRAVALKAIRKGVDLADQPGLSRLAAVTSVNLKTDAEGNLRVFLDGEDVTEEIRSPAVSKAVSLVARVPAVRERLVELQRAMASGGGVVMEGRDIGTVVLPDAEIKIFLTASPEERARRRREELAARGYIVDQHQMVNEITERDRIDTTRAAGPLVPAADAEIIDCSSMPVEKVVKMIVARVSAGRRE.

An ATP-binding site is contributed by 11 to 19; the sequence is GPAGAGKST.

This sequence belongs to the cytidylate kinase family. Type 1 subfamily.

It localises to the cytoplasm. The enzyme catalyses CMP + ATP = CDP + ADP. The catalysed reaction is dCMP + ATP = dCDP + ADP. This chain is Cytidylate kinase, found in Pelotomaculum thermopropionicum (strain DSM 13744 / JCM 10971 / SI).